A 41-amino-acid chain; its full sequence is Large ribosomal subunit protein bL36 (41 aa).

This sequence belongs to the bacterial ribosomal protein bL36 family.

The chain is Large ribosomal subunit protein bL36 from Parvibaculum lavamentivorans (strain DS-1 / DSM 13023 / NCIMB 13966).